A 139-amino-acid chain; its full sequence is Hydrogenase maturation factor HypA (139 aa).

Histidine 2 contacts Ni(2+). Residues cysteine 75, cysteine 78, cysteine 111, and cysteine 114 each coordinate Zn(2+).

It belongs to the HypA/HybF family.

Involved in the maturation of [NiFe] hydrogenases. Required for nickel insertion into the metal center of the hydrogenase. This is Hydrogenase maturation factor HypA from Ignicoccus hospitalis (strain KIN4/I / DSM 18386 / JCM 14125).